A 90-amino-acid polypeptide reads, in one-letter code: Small ribosomal subunit protein bS20 (90 aa).

Positions 1-27 (MANSAQAKKRARQNEKRELHNASQRSA) are disordered.

It belongs to the bacterial ribosomal protein bS20 family.

In terms of biological role, binds directly to 16S ribosomal RNA. This is Small ribosomal subunit protein bS20 from Coxiella burnetii (strain CbuK_Q154) (Coxiella burnetii (strain Q154)).